The following is a 253-amino-acid chain: 4-phosphopantoate--beta-alanine ligase (253 aa).

Residues Arg-17, Arg-39, 179–181 (DLN), 185–186 (RT), and 197–198 (NL) each bind ATP.

This sequence belongs to the archaeal phosphopantothenate synthetase family. Homodimer.

It carries out the reaction (R)-4-phosphopantoate + beta-alanine + ATP = (R)-4'-phosphopantothenate + AMP + diphosphate + H(+). Its pathway is cofactor biosynthesis; coenzyme A biosynthesis. Its function is as follows. Catalyzes the condensation of (R)-4-phosphopantoate and beta-alanine to 4'-phosphopantothenate in the CoA biosynthesis pathway. In Methanosarcina mazei (strain ATCC BAA-159 / DSM 3647 / Goe1 / Go1 / JCM 11833 / OCM 88) (Methanosarcina frisia), this protein is 4-phosphopantoate--beta-alanine ligase.